Consider the following 375-residue polypeptide: Growth/differentiation factor 8 (375 aa).

The first 23 residues, 1–23 (MQKLAVYVYIYLFMQIAVDPVAL), serve as a signal peptide directing secretion. Residues 24-266 (DGSSQPTENA…VTDTPKRSRR (243 aa)) constitute a propeptide that is removed on maturation. N-linked (GlcNAc...) asparagine glycosylation is present at asparagine 71. Intrachain disulfides connect cysteine 272-cysteine 282, cysteine 281-cysteine 340, cysteine 309-cysteine 372, and cysteine 313-cysteine 374.

Belongs to the TGF-beta family. As to quaternary structure, homodimer; disulfide-linked.

It localises to the secreted. Functionally, acts specifically as a negative regulator of skeletal muscle growth. The polypeptide is Growth/differentiation factor 8 (MSTN) (Gallus gallus (Chicken)).